Consider the following 901-residue polypeptide: Protein translocase subunit SecA (901 aa).

ATP is bound by residues Gln-87, 105–109 (GEGKT), and Asp-512. Zn(2+)-binding residues include Cys-885, Cys-887, Cys-896, and His-897.

The protein belongs to the SecA family. In terms of assembly, monomer and homodimer. Part of the essential Sec protein translocation apparatus which comprises SecA, SecYEG and auxiliary proteins SecDF-YajC and YidC. It depends on Zn(2+) as a cofactor.

It localises to the cell inner membrane. The protein localises to the cytoplasm. It catalyses the reaction ATP + H2O + cellular proteinSide 1 = ADP + phosphate + cellular proteinSide 2.. In terms of biological role, part of the Sec protein translocase complex. Interacts with the SecYEG preprotein conducting channel. Has a central role in coupling the hydrolysis of ATP to the transfer of proteins into and across the cell membrane, serving both as a receptor for the preprotein-SecB complex and as an ATP-driven molecular motor driving the stepwise translocation of polypeptide chains across the membrane. The protein is Protein translocase subunit SecA of Salmonella typhi.